Consider the following 119-residue polypeptide: EF-hand calcium-binding domain-containing protein 2 (119 aa).

The first 22 residues, M1–S22, serve as a signal peptide directing secretion. One can recognise an EF-hand domain in the interval V82–L117. Ca(2+)-binding residues include D95, D97, D99, and E106.

Component of the acid-soluble organic matrix of calcified layers of the shell (at protein level).

The protein localises to the secreted. The chain is EF-hand calcium-binding domain-containing protein 2 from Lottia gigantea (Giant owl limpet).